The sequence spans 368 residues: Peptide chain release factor 2 (368 aa).

At Gln250 the chain carries N5-methylglutamine.

Belongs to the prokaryotic/mitochondrial release factor family. In terms of processing, methylated by PrmC. Methylation increases the termination efficiency of RF2.

Its subcellular location is the cytoplasm. Peptide chain release factor 2 directs the termination of translation in response to the peptide chain termination codons UGA and UAA. The protein is Peptide chain release factor 2 of Chlamydia abortus (strain DSM 27085 / S26/3) (Chlamydophila abortus).